The sequence spans 314 residues: Acetaldehyde dehydrogenase 1 (314 aa).

16-19 contributes to the NAD(+) binding site; it reads SGNI. The active-site Acyl-thioester intermediate is the Cys-134. Residues 165 to 173 and Asn-292 each bind NAD(+); that span reads SAGPGTRAN.

This sequence belongs to the acetaldehyde dehydrogenase family.

It carries out the reaction acetaldehyde + NAD(+) + CoA = acetyl-CoA + NADH + H(+). This chain is Acetaldehyde dehydrogenase 1 (mhpF), found in Cupriavidus necator (strain ATCC 17699 / DSM 428 / KCTC 22496 / NCIMB 10442 / H16 / Stanier 337) (Ralstonia eutropha).